The following is a 1064-amino-acid chain: Serine/threonine protein kinase KIN1 (1064 aa).

The tract at residues 1–113 (MDDYHVNTAF…SSQGMPKQFH (113 aa)) is disordered. The segment covering 8 to 36 (TAFSMGRGNQQDDGNSESNSMHTQPSTMA) has biased composition (polar residues). A compositionally biased stretch (basic and acidic residues) spans 74–91 (AEQKERQVELEGKSRENA). Residues 93–108 (KPNTTSQSRVSSSQGM) show a composition bias toward polar residues. The 279-residue stretch at 120–398 (WEFVETVGAG…LKQVVEHHWM (279 aa)) folds into the Protein kinase domain. Residues 126 to 134 (VGAGSMGKV) and lysine 149 contribute to the ATP site. The Proton acceptor role is filled by aspartate 269. Serine 534 carries the phosphoserine modification. The segment at 549 to 621 (SEPEATLATK…SPTPQGNDYQ (73 aa)) is disordered. Over residues 557-571 (TKDTSVPFTPKNSDG) the composition is skewed to polar residues. At serine 593 the chain carries Phosphoserine. The span at 598–608 (KSSDNQRREME) shows a compositional bias: basic and acidic residues. The residue at position 646 (serine 646) is a Phosphoserine. Disordered regions lie at residues 652–672 (TIEQ…QKTH), 694–714 (MNEP…FPAL), 762–797 (EGSD…HARR), 823–843 (LESS…QTND), and 958–1016 (HESI…GMTT). Residues 654–670 (EQTSVNSNNSINKPVQK) are compositionally biased toward polar residues. Position 764 is a phosphoserine (serine 764). Residues 779–794 (KGRKLHPSARAKSVGH) are compositionally biased toward basic residues. 3 stretches are compositionally biased toward polar residues: residues 832–843 (DSLGNVTSQTND), 963–989 (RQGS…SITE), and 998–1016 (GTSL…GMTT). Serine 986 bears the Phosphoserine mark. Residues 1015-1064 (TTTEKEPIKFEIHIVKVRIVGLAGVHFKKISGNTWLYKELASSILKELKL) form the KA1 domain.

The protein belongs to the protein kinase superfamily. CAMK Ser/Thr protein kinase family. NIM1 subfamily. As to quaternary structure, interacts with SEC9 and SRO7. Autophosphorylated.

It is found in the cytoplasm. The protein resides in the cell membrane. The enzyme catalyses L-seryl-[protein] + ATP = O-phospho-L-seryl-[protein] + ADP + H(+). It carries out the reaction L-threonyl-[protein] + ATP = O-phospho-L-threonyl-[protein] + ADP + H(+). In terms of biological role, serine/threonine protein kinase involved in the regulation of exocytosis. Induces phosphorylation of SEC9 and its release from the plasma membrane to the cytosol. The protein is Serine/threonine protein kinase KIN1 (KIN1) of Saccharomyces cerevisiae (strain ATCC 204508 / S288c) (Baker's yeast).